The primary structure comprises 178 residues: Deoxyuridine 5'-triphosphate nucleotidohydrolase (178 aa).

The protein belongs to the dUTPase family. It depends on Mg(2+) as a cofactor.

It carries out the reaction dUTP + H2O = dUMP + diphosphate + H(+). Its pathway is pyrimidine metabolism; dUMP biosynthesis; dUMP from dCTP (dUTP route): step 2/2. Its function is as follows. This enzyme is involved in nucleotide metabolism: it produces dUMP, the immediate precursor of thymidine nucleotides and it decreases the intracellular concentration of dUTP so that uracil cannot be incorporated into DNA. The protein is Deoxyuridine 5'-triphosphate nucleotidohydrolase of Fowl adenovirus A serotype 1 (strain CELO / Phelps) (FAdV-1).